An 815-amino-acid polypeptide reads, in one-letter code: Lon protease 2 (815 aa).

The 194-residue stretch at 19 to 212 folds into the Lon N-terminal domain; the sequence is LPVLPLINTV…RLSVVLSQEI (194 aa). 365–372 contacts ATP; it reads GPPGVGKT. Residues 601–782 form the Lon proteolytic domain; the sequence is RDEIGVATGM…DEVLPIAFVS (182 aa). Active-site residues include S688 and K731.

This sequence belongs to the peptidase S16 family. In terms of assembly, homohexamer. Organized in a ring with a central cavity.

The protein localises to the cytoplasm. The enzyme catalyses Hydrolysis of proteins in presence of ATP.. Its function is as follows. ATP-dependent serine protease that mediates the selective degradation of mutant and abnormal proteins as well as certain short-lived regulatory proteins. Required for cellular homeostasis and for survival from DNA damage and developmental changes induced by stress. Degrades polypeptides processively to yield small peptide fragments that are 5 to 10 amino acids long. Binds to DNA in a double-stranded, site-specific manner. The sequence is that of Lon protease 2 from Herpetosiphon aurantiacus (strain ATCC 23779 / DSM 785 / 114-95).